Reading from the N-terminus, the 345-residue chain is Biotin synthase (345 aa).

Positions 38-256 (RQVQVSTLLS…IAVARIMMPA (219 aa)) constitute a Radical SAM core domain. Positions 53, 57, and 60 each coordinate [4Fe-4S] cluster. 4 residues coordinate [2Fe-2S] cluster: Cys97, Cys128, Cys188, and Arg260.

The protein belongs to the radical SAM superfamily. Biotin synthase family. Homodimer. [4Fe-4S] cluster is required as a cofactor. The cofactor is [2Fe-2S] cluster.

The enzyme catalyses (4R,5S)-dethiobiotin + (sulfur carrier)-SH + 2 reduced [2Fe-2S]-[ferredoxin] + 2 S-adenosyl-L-methionine = (sulfur carrier)-H + biotin + 2 5'-deoxyadenosine + 2 L-methionine + 2 oxidized [2Fe-2S]-[ferredoxin]. The protein operates within cofactor biosynthesis; biotin biosynthesis; biotin from 7,8-diaminononanoate: step 2/2. In terms of biological role, catalyzes the conversion of dethiobiotin (DTB) to biotin by the insertion of a sulfur atom into dethiobiotin via a radical-based mechanism. This chain is Biotin synthase, found in Pectobacterium atrosepticum (strain SCRI 1043 / ATCC BAA-672) (Erwinia carotovora subsp. atroseptica).